Reading from the N-terminus, the 415-residue chain is Ribulose bisphosphate carboxylase large chain (415 aa).

Residues Asn-101 and Thr-151 each contribute to the substrate site. Lys-153 serves as the catalytic Proton acceptor. Residue Lys-155 coordinates substrate. Residues Lys-179, Asp-181, and Glu-182 each coordinate Mg(2+). Lys-179 is subject to N6-carboxylysine. Catalysis depends on His-272, which acts as the Proton acceptor. Residues Arg-273, His-305, and Ser-357 each coordinate substrate.

It belongs to the RuBisCO large chain family. Type I subfamily. As to quaternary structure, heterohexadecamer of 8 large chains and 8 small chains; disulfide-linked. The disulfide link is formed within the large subunit homodimers. The cofactor is Mg(2+). In terms of processing, the disulfide bond which can form in the large chain dimeric partners within the hexadecamer appears to be associated with oxidative stress and protein turnover.

Its subcellular location is the plastid. The protein localises to the chloroplast. It carries out the reaction 2 (2R)-3-phosphoglycerate + 2 H(+) = D-ribulose 1,5-bisphosphate + CO2 + H2O. The catalysed reaction is D-ribulose 1,5-bisphosphate + O2 = 2-phosphoglycolate + (2R)-3-phosphoglycerate + 2 H(+). In terms of biological role, ruBisCO catalyzes two reactions: the carboxylation of D-ribulose 1,5-bisphosphate, the primary event in carbon dioxide fixation, as well as the oxidative fragmentation of the pentose substrate in the photorespiration process. Both reactions occur simultaneously and in competition at the same active site. The protein is Ribulose bisphosphate carboxylase large chain of Cibotium barometz (Scythian lamb).